We begin with the raw amino-acid sequence, 1002 residues long: TOG array regulator of axonemal microtubules protein 2 (1002 aa).

Disordered regions lie at residues 54-74, 131-214, 332-351, 402-421, and 426-450; these read SSVL…EDQS, KRRL…SAQE, ETRS…KVQV, PLRG…PRRN, and LQRK…GFAR.

The protein belongs to the Crescerin family.

The chain is TOG array regulator of axonemal microtubules protein 2 (Togaram2) from Mus musculus (Mouse).